A 572-amino-acid chain; its full sequence is 2-succinyl-5-enolpyruvyl-6-hydroxy-3-cyclohexene-1-carboxylate synthase (572 aa).

This sequence belongs to the TPP enzyme family. MenD subfamily. Homodimer. It depends on Mg(2+) as a cofactor. Mn(2+) serves as cofactor. The cofactor is thiamine diphosphate.

It carries out the reaction isochorismate + 2-oxoglutarate + H(+) = 5-enolpyruvoyl-6-hydroxy-2-succinyl-cyclohex-3-ene-1-carboxylate + CO2. Its pathway is quinol/quinone metabolism; 1,4-dihydroxy-2-naphthoate biosynthesis; 1,4-dihydroxy-2-naphthoate from chorismate: step 2/7. The protein operates within quinol/quinone metabolism; menaquinone biosynthesis. Its function is as follows. Catalyzes the thiamine diphosphate-dependent decarboxylation of 2-oxoglutarate and the subsequent addition of the resulting succinic semialdehyde-thiamine pyrophosphate anion to isochorismate to yield 2-succinyl-5-enolpyruvyl-6-hydroxy-3-cyclohexene-1-carboxylate (SEPHCHC). The sequence is that of 2-succinyl-5-enolpyruvyl-6-hydroxy-3-cyclohexene-1-carboxylate synthase from Shewanella amazonensis (strain ATCC BAA-1098 / SB2B).